The primary structure comprises 592 residues: Cell division protein FtsZ (592 aa).

Residues 24–28, 111–113, Glu142, Arg146, and Asp190 each bind GTP; these read GGGGN and GTG. Residues 333 to 362 are disordered; it reads KFQKSVSSVRKNDSGINQTASHPQSSQLRS.

This sequence belongs to the FtsZ family. Homodimer. Polymerizes to form a dynamic ring structure in a strictly GTP-dependent manner. Interacts directly with several other division proteins.

It localises to the cytoplasm. Its function is as follows. Essential cell division protein that forms a contractile ring structure (Z ring) at the future cell division site. The regulation of the ring assembly controls the timing and the location of cell division. One of the functions of the FtsZ ring is to recruit other cell division proteins to the septum to produce a new cell wall between the dividing cells. Binds GTP and shows GTPase activity. This chain is Cell division protein FtsZ, found in Bartonella bacilliformis.